The following is a 363-amino-acid chain: MISHTPEVQDINSFSRFEFLKETYGIIWAFIPIFTPVLGITIGVLVIVWLEREISAGIQQRIGPEYAGPLGVLQALADGAKLLFKENLFPSRGETRLFSIGPSIAVISILVSYSVVPFGSHLVLVDLNIGVFLWIAISSIAPIGLLMSGYGSNNKYSFLGGLRAAAQSISYEIPLTLCVLSISLLSNSSSTVDIVEAQSKYGFWGWNLWRQPIGFIIFLISSLAECERLPFDLPEAEEELIAGYQTEYSGIKFGLFYVASYLNLLVSSLFVTILYLGGWNISIPYIFVFDFFEINKTYGVFEPTIGMFITLAKTYLFLFIPITTRWTLPRLRMDQLLNLGWKFLLPISLGNLLLTTSSQLFSL.

Transmembrane regions (helical) follow at residues 30 to 50, 104 to 124, 129 to 149, 248 to 268, 269 to 289, 300 to 320, and 336 to 356; these read FIPIFTPVLGITIGVLVIVWL, IAVISILVSYSVVPFGSHLVL, IGVFLWIAISSIAPIGLLMSG, YSGIKFGLFYVASYLNLLVSS, LFVTILYLGGWNISIPYIFVF, VFEPTIGMFITLAKTYLFLFI, and LLNLGWKFLLPISLGNLLLTT.

It belongs to the complex I subunit 1 family. In terms of assembly, NDH is composed of at least 16 different subunits, 5 of which are encoded in the nucleus.

The protein localises to the plastid. The protein resides in the chloroplast thylakoid membrane. It carries out the reaction a plastoquinone + NADH + (n+1) H(+)(in) = a plastoquinol + NAD(+) + n H(+)(out). The catalysed reaction is a plastoquinone + NADPH + (n+1) H(+)(in) = a plastoquinol + NADP(+) + n H(+)(out). NDH shuttles electrons from NAD(P)H:plastoquinone, via FMN and iron-sulfur (Fe-S) centers, to quinones in the photosynthetic chain and possibly in a chloroplast respiratory chain. The immediate electron acceptor for the enzyme in this species is believed to be plastoquinone. Couples the redox reaction to proton translocation, and thus conserves the redox energy in a proton gradient. This chain is NAD(P)H-quinone oxidoreductase subunit 1, chloroplastic, found in Morus indica (Mulberry).